Here is a 344-residue protein sequence, read N- to C-terminus: Phosphoribosylformylglycinamidine cyclo-ligase (344 aa).

The protein belongs to the AIR synthase family.

It localises to the cytoplasm. The catalysed reaction is 2-formamido-N(1)-(5-O-phospho-beta-D-ribosyl)acetamidine + ATP = 5-amino-1-(5-phospho-beta-D-ribosyl)imidazole + ADP + phosphate + H(+). Its pathway is purine metabolism; IMP biosynthesis via de novo pathway; 5-amino-1-(5-phospho-D-ribosyl)imidazole from N(2)-formyl-N(1)-(5-phospho-D-ribosyl)glycinamide: step 2/2. In Synechococcus sp. (strain RCC307), this protein is Phosphoribosylformylglycinamidine cyclo-ligase.